A 194-amino-acid chain; its full sequence is CASP-like protein 1D1 (194 aa).

Over residues 1 to 16 (MGSDETKSTLDTERST) the composition is skewed to basic and acidic residues. Residues 1–23 (MGSDETKSTLDTERSTVPRTGTT) form a disordered region. Topologically, residues 1–31 (MGSDETKSTLDTERSTVPRTGTTTKSCSITQ) are cytoplasmic. Residues 32-52 (VVLRFVLFAATLTSIVVMVTS) form a helical membrane-spanning segment. The Extracellular segment spans residues 53-77 (KQTKNIFIPGTPIRIPAAKFTNSPA). A helical transmembrane segment spans residues 78–98 (LIYFVVALSVACFYSIVSTFV). Residues 99–109 (TVSAFKKHSCS) are Cytoplasmic-facing. Residues 110–130 (AILLLNLAIMDAVMVGIVASA) traverse the membrane as a helical segment. At 131-163 (TGAGGGVAYLGLKGNKEVRWGKICNIYDKFCRH) the chain is on the extracellular side. The helical transmembrane segment at 164–184 (VGGAIAVSLFASVILLLLSII) threads the bilayer. At 185-194 (SVLSLYKKIR) the chain is on the cytoplasmic side.

The protein belongs to the Casparian strip membrane proteins (CASP) family. As to quaternary structure, homodimer and heterodimers.

The protein resides in the cell membrane. In Arabidopsis lyrata subsp. lyrata (Lyre-leaved rock-cress), this protein is CASP-like protein 1D1.